A 282-amino-acid chain; its full sequence is MGEHNLLNPGFVGPLVNIHTGDTFYFPNFRASGAQLPGLPSLSYPRRDNVCSLSWPSAEPCNGYPQPYLGSPVSLNPPFGRTCELARVEDGKGYYREPCAEGGGGGLKREERGRDPGAGPGAALLPLEPSGPPALGFKYDYAAGGGGGDGGGGAGPPHDPPSCQSLESDSSSSLLNEGNKGAGAGDPGSLVSPLNPGGGLSASGAPWYPINSRSRKKRKPYSKLQLAELEGEFLVNEFITRQRRRELSDRLNLSDQQVKIWFQNRRMKKKRLLLREQALSFF.

2 disordered regions span residues 94–129 and 147–214; these read YYRE…PLEP and GGDG…NSRS. Over residues 162–175 the composition is skewed to low complexity; the sequence is SCQSLESDSSSSLL. The homeobox DNA-binding region spans 214–273; that stretch reads SRKKRKPYSKLQLAELEGEFLVNEFITRQRRRELSDRLNLSDQQVKIWFQNRRMKKKRLL.

Belongs to the Abd-B homeobox family.

The protein localises to the nucleus. In terms of biological role, sequence-specific transcription factor which is part of a developmental regulatory system that provides cells with specific positional identities on the anterior-posterior axis. This is Homeobox protein Hox-C12 (HOXC12) from Homo sapiens (Human).